We begin with the raw amino-acid sequence, 1499 residues long: Autophagy-related protein 2 (1499 aa).

Over residues 211–221 (EQSVPSYGSSS) the composition is skewed to polar residues. Residues 211 to 237 (EQSVPSYGSSSSDKEDDNTSDSEDPLS) form a disordered region. A compositionally biased stretch (acidic residues) spans 224–234 (KEDDNTSDSED).

The protein belongs to the ATG2 family.

It is found in the preautophagosomal structure membrane. It localises to the endoplasmic reticulum membrane. It carries out the reaction a 1,2-diacyl-sn-glycero-3-phosphocholine(in) = a 1,2-diacyl-sn-glycero-3-phosphocholine(out). It catalyses the reaction a 1,2-diacyl-sn-glycero-3-phospho-L-serine(in) = a 1,2-diacyl-sn-glycero-3-phospho-L-serine(out). The enzyme catalyses a 1,2-diacyl-sn-glycero-3-phosphoethanolamine(in) = a 1,2-diacyl-sn-glycero-3-phosphoethanolamine(out). Its function is as follows. Lipid transfer protein required for autophagosome completion and peroxisome degradation. Tethers the edge of the isolation membrane (IM) to the endoplasmic reticulum (ER) and mediates direct lipid transfer from ER to IM for IM expansion. ATG2 binds to the ER exit site (ERES), which is the membrane source for autophagosome formation, using basic residues in its N-terminal region (NR) and to the expanding edge of the IM through its C-terminal region. The latter binding is assisted by an ATG18-PtdIns3P interaction. ATG2 then extracts phospholipids from the membrane source using its NR and transfers them to ATG9 to the IM through its predicted beta-sheet-rich structure for membrane expansion. The sequence is that of Autophagy-related protein 2 from Kluyveromyces marxianus (strain DMKU3-1042 / BCC 29191 / NBRC 104275) (Yeast).